The following is a 292-amino-acid chain: Cyclin-dependent kinase 5 homolog (292 aa).

The region spanning 4 to 285 (YSKIEKLGEG…AAAALKHPYF (282 aa)) is the Protein kinase domain. ATP-binding positions include 10 to 18 (LGEGTYGIV) and lysine 33. A Phosphothreonine modification is found at threonine 14. Tyrosine 15 is subject to Phosphotyrosine. Aspartate 126 acts as the Proton acceptor in catalysis.

This sequence belongs to the protein kinase superfamily. CMGC Ser/Thr protein kinase family. CDC2/CDKX subfamily.

The catalysed reaction is L-seryl-[protein] + ATP = O-phospho-L-seryl-[protein] + ADP + H(+). The enzyme catalyses L-threonyl-[protein] + ATP = O-phospho-L-threonyl-[protein] + ADP + H(+). With respect to regulation, phosphorylation at Thr-14 or Tyr-15 inactivates the enzyme. The protein is Cyclin-dependent kinase 5 homolog (cdk5) of Dictyostelium discoideum (Social amoeba).